A 348-amino-acid chain; its full sequence is Rhodopsin (348 aa).

M1 carries the N-acetylmethionine modification. The Extracellular segment spans residues 1 to 36 (MNGTEGPNFYVPFSNATGVVRSPFEYPQYYLAEPWQ). N2 and N15 each carry an N-linked (GlcNAc...) asparagine glycan. Residues 37 to 61 (FSMLAAYMFMLIVLGFPINFLTLYV) traverse the membrane as a helical segment. Residues 62 to 73 (TVQHKKLRTPLN) are Cytoplasmic-facing. The helical transmembrane segment at 74–96 (YILLNLAVADLFMVFGGFTTTLY) threads the bilayer. The Extracellular segment spans residues 97-110 (TSLHGYFVFGPTGC). C110 and C187 form a disulfide bridge. Residues 111 to 133 (NLEGFFATLGGEIALWSLVVLAI) form a helical membrane-spanning segment. The 'Ionic lock' involved in activated form stabilization motif lies at 134-136 (ERY). Residues 134-152 (ERYVVVCKPMSNFRFGENH) are Cytoplasmic-facing. Residues 153 to 173 (AIMGLVFTWIMALACAAPPLV) traverse the membrane as a helical segment. At 174–202 (GWSRYIPEGMQCSCGIDYYTLKPEVNNES) the chain is on the extracellular side. E201 contributes to the Zn(2+) binding site. Residues 203 to 224 (FVIYMFVVHFFIPLFVIFFCYG) form a helical membrane-spanning segment. The Cytoplasmic portion of the chain corresponds to 225-252 (QLVFTVKEAAAQQQESATTQKAEKEVTR). The chain crosses the membrane as a helical span at residues 253-274 (MVIIMVIAFLICWLPYAGVAFY). Topologically, residues 275–286 (IFTHQGSNFGPI) are extracellular. Residue Q279 participates in Zn(2+) binding. A helical transmembrane segment spans residues 287–308 (FMTLPAFFAKTASIYNPVIYIM). Position 296 is an N6-(retinylidene)lysine (K296). Residues 309 to 348 (MNKQFRTCMITTLCCGKNPLGDDEASTTASKTETSQVAPA) lie on the Cytoplasmic side of the membrane. S-palmitoyl cysteine attachment occurs at residues C322 and C323. An interaction with SAG region spans residues 330–348 (DDEASTTASKTETSQVAPA). S334 is subject to Phosphoserine. Residues T335 and T336 each carry the phosphothreonine modification. Residue S338 is modified to Phosphoserine. Phosphothreonine occurs at positions 340 and 342. S343 carries the phosphoserine modification.

The protein belongs to the G-protein coupled receptor 1 family. Opsin subfamily. As to quaternary structure, homodimer. May form a complex composed of RHO, GRK1 and RCVRN in a Ca(2+)-dependent manner; RCVRN prevents the interaction between GRK1 and RHO. Interacts with GRK1. Interacts (phosphorylated form) with SAG. Interacts with GNAT1. Interacts with GNAT3. SAG and G-proteins compete for a common binding site. Interacts with PRCD; the interaction promotes PRCD stability. Forms a complex with ASAP1 and ARF4. Forms a complex with ASAP1, RAB11A, Rabin8/RAB3IP, ARF4 and RAB11FIP3; the complex regulates Golgi-to-cilia rhodopsin/RHO transport in photoreceptors. In terms of processing, phosphorylated on some or all of the serine and threonine residues present in the C-terminal region. Contains one covalently linked retinal chromophore. Upon light absorption, the covalently bound 11-cis-retinal is converted to all-trans-retinal. After hydrolysis of the Schiff base and release of the covalently bound all-trans-retinal, active rhodopsin is regenerated by binding of a fresh molecule of 11-cis-retinal.

It localises to the membrane. The protein resides in the cell projection. The protein localises to the cilium. Its subcellular location is the photoreceptor outer segment. Photoreceptor required for image-forming vision at low light intensity. Required for photoreceptor cell viability after birth. Light-induced isomerization of 11-cis to all-trans retinal triggers a conformational change that activates signaling via G-proteins. Subsequent receptor phosphorylation mediates displacement of the bound G-protein alpha subunit by the arrestin SAG and terminates signaling. This chain is Rhodopsin (RHO), found in Otolemur crassicaudatus (Brown greater galago).